A 182-amino-acid chain; its full sequence is MEFSVGGVEVVLMRGDITEVEADAIVNAANSYLEHGGGVAGAIVRKGGQVIQEESREWVRKHGPVPVGDVAVTSAGRLKAKYVIHAVGPRCGVEPIEKLAEAVKNALLKAEELGLVSIALPAISTGIFGCPYDAAAEQMATAIREVAPALRSIRRILVVLYGEEAYQKFLEVFKKHLPGGRL.

Residues 1 to 177 enclose the Macro domain; that stretch reads MEFSVGGVEV…KFLEVFKKHL (177 aa).

This is an uncharacterized protein from Pyrobaculum aerophilum (strain ATCC 51768 / DSM 7523 / JCM 9630 / CIP 104966 / NBRC 100827 / IM2).